The primary structure comprises 2837 residues: Bifunctional DNA-directed RNA polymerase subunit beta-beta' (2837 aa).

Positions 1–1433 are DNA-directed RNA polymerase subunit beta; sequence MVDSSYMYAS…CLNVDLKQND (1433 aa). A DNA-directed RNA polymerase subunit beta' region spans residues 1436–2837; that stretch reads IEDISHTNIA…ESVVAYDQSN (1402 aa). Cysteine 1501, cysteine 1503, cysteine 1516, and cysteine 1519 together coordinate Zn(2+). The Mg(2+) site is built by aspartate 1893, aspartate 1895, and aspartate 1897. Zn(2+) is bound by residues cysteine 2235, cysteine 2309, cysteine 2316, and cysteine 2319.

In the N-terminal section; belongs to the RNA polymerase beta chain family. It in the C-terminal section; belongs to the RNA polymerase beta' chain family. As to quaternary structure, the RNAP catalytic core consists of 2 alpha, 1 beta/beta' and 1 omega subunit. When a sigma factor is associated with the core the holoenzyme is formed, which can initiate transcription. Mg(2+) is required as a cofactor. It depends on Zn(2+) as a cofactor.

The enzyme catalyses RNA(n) + a ribonucleoside 5'-triphosphate = RNA(n+1) + diphosphate. Functionally, DNA-dependent RNA polymerase catalyzes the transcription of DNA into RNA using the four ribonucleoside triphosphates as substrates. The sequence is that of Bifunctional DNA-directed RNA polymerase subunit beta-beta' (rpoBC) from Wolbachia pipientis wMel.